A 389-amino-acid chain; its full sequence is Choline/ethanolaminephosphotransferase 1 (389 aa).

Residues 40–60 (VFPLWMPPNMITLMGFMFLVT) form a helical membrane-spanning segment. A CDP-choline-binding site is contributed by N48. Mg(2+) contacts are provided by D95 and D98. R103 serves as a coordination point for CDP-choline. Position 116 (D116) interacts with Mg(2+). H117 (proton acceptor) is an active-site residue. Position 120 (D120) interacts with Mg(2+). A run of 7 helical transmembrane segments spans residues 141–161 (TFWF…EHYF), 176–196 (GLAL…EWWA), 221–241 (VLYM…VTNV), 252–272 (MVLA…VLIW), 280–300 (LIAT…GFLV), 322–344 (SLLY…GVPL), and 350–370 (VLLG…TSVI).

It belongs to the CDP-alcohol phosphatidyltransferase class-I family. Mg(2+) serves as cofactor. It depends on Mn(2+) as a cofactor.

The protein resides in the membrane. The enzyme catalyses CDP-ethanolamine + a 1,2-diacyl-sn-glycerol = a 1,2-diacyl-sn-glycero-3-phosphoethanolamine + CMP + H(+). It catalyses the reaction CDP-choline + a 1,2-diacyl-sn-glycerol = a 1,2-diacyl-sn-glycero-3-phosphocholine + CMP + H(+). The protein operates within phospholipid metabolism; phosphatidylethanolamine biosynthesis; phosphatidylethanolamine from ethanolamine: step 3/3. Its pathway is phospholipid metabolism; phosphatidylcholine biosynthesis; phosphatidylcholine from phosphocholine: step 2/2. In terms of biological role, catalyzes both phosphatidylcholine and phosphatidylethanolamine biosynthesis from CDP-choline and CDP-ethanolamine, respectively. Has a higher cholinephosphotransferase activity than ethanolaminephosphotransferase activity. The polypeptide is Choline/ethanolaminephosphotransferase 1 (AAPT1) (Arabidopsis thaliana (Mouse-ear cress)).